Reading from the N-terminus, the 274-residue chain is Probable WRKY transcription factor 49 (274 aa).

Positions 108-173 form a DNA-binding region, WRKY; the sequence is NSNGMCDDGY…YEGFHFHYTY (66 aa). The disordered stretch occupies residues 188-228; that stretch reads KTKIHKHNAQDMNKKSQTQEESKEAQLGELTNQNHPVNKAQ. Positions 193–222 form a coiled coil; that stretch reads KHNAQDMNKKSQTQEESKEAQLGELTNQNH. Basic and acidic residues predominate over residues 195–213; sequence NAQDMNKKSQTQEESKEAQ. Polar residues predominate over residues 216 to 228; it reads ELTNQNHPVNKAQ.

Belongs to the WRKY group II-c family.

The protein localises to the nucleus. Functionally, transcription factor. Interacts specifically with the W box (5'-(T)TGAC[CT]-3'), a frequently occurring elicitor-responsive cis-acting element. The protein is Probable WRKY transcription factor 49 (WRKY49) of Arabidopsis thaliana (Mouse-ear cress).